We begin with the raw amino-acid sequence, 324 residues long: Transmembrane protein 171 (324 aa).

4 helical membrane passes run 22-42, 57-77, 113-133, and 160-180; these read IFCF…LSIF, MVLK…VILA, LIFG…GIWV, and FLSL…FFVV. The span at 229 to 239 shows a compositional bias: low complexity; sequence PESSASAVAES. 2 disordered regions span residues 229-248 and 279-304; these read PESS…LLPN and YTIS…PPRY. The segment covering 279–291 has biased composition (polar residues); that stretch reads YTISGTNSSSEAS.

It localises to the membrane. This Homo sapiens (Human) protein is Transmembrane protein 171 (TMEM171).